We begin with the raw amino-acid sequence, 260 residues long: Protein FAM220A (260 aa).

2 disordered regions span residues 1–75 (MKAG…SKAS) and 129–158 (GSDW…GRPG). Residues 35–47 (RNPSPSVVPSWTD) show a composition bias toward polar residues.

In terms of assembly, interacts with transcriptional activator STAT3; the interaction occurs in both the nucleus and the cytoplasm, is enhanced by IL6 and promotes STAT3 dephosphorylation, leading to negative regulation of STAT3 transcriptional activator activity. Can interact with both unphosphorylated and phosphorylated STAT3 but interacts preferentially with phosphorylated STAT3 in the nucleus. Interacts with protein phosphatase PTPN2/TC45; this promotes interaction of PTPN2 with STAT3, leading to dephosphorylation of STAT3 by PTPN2. In terms of tissue distribution, expressed at high levels in the testis where it is detected within elongated spermatids during the late stages (steps 9-16) of haploid germ cell development and in the tubular lumen (at protein level).

It is found in the nucleus. The protein localises to the cytoplasm. It localises to the cytoplasmic vesicle. The protein resides in the secretory vesicle. Its subcellular location is the acrosome. In terms of biological role, promotes dephosphorylation of transcriptional activator STAT3 by interacting with both STAT3 and protein phosphatase PTPN2. This promotes interaction of PTPN2 with STAT3 and mediates STAT3 dephosphorylation by PTPN2, leading to negative regulation of STAT3 transcriptional activator activity. May be required for spermiogenesis or sperm function. The polypeptide is Protein FAM220A (Mus musculus (Mouse)).